A 467-amino-acid polypeptide reads, in one-letter code: MEKKPLTPRQIVDRLDQYIVGQQNAKKAVAVALRNRYRRSLLDEKLKDEVVPKNILMMGPTGVGKTEIARRIAKLSGAPFIKIEATKFTEVGYVGRDVESMVRDLVETSVRLIKEEKMNEVKEQAEENANKRIVRLLVPGKKKQSGVKNPFEMFFGGSQPNGEDEAESQEEANIEEKRKRMAHQLALGELEDYYVTVEVEEQQPSMFDMLQGSGMEQMGMNMQDALSGLMPKKKKRRKMTVREARKVLTNEEASKLIDMDEVGQEAVQRAEESGIIFIDEIDKIAKNGGASSSADVSREGVQRDILPIVEGSTVVTKYGSVKTDHVLFIAAGAFHMAKPSDLIPELQGRFPIRVELNKLTVDDFVRILVEPDNALLKQYQALLQTEGISLEFSDEAIHKIAEVAYHVNQDTDNIGARRLHTILERLLEDLSFEAPDVTMEKITITPQYVEEKLGTIAKNKDLSQFIL.

ATP-binding positions include V20, 62 to 67 (GVGKTE), D279, E345, and R417.

This sequence belongs to the ClpX chaperone family. HslU subfamily. As to quaternary structure, a double ring-shaped homohexamer of ClpQ is capped on each side by a ring-shaped ClpY homohexamer. The assembly of the ClpQ/ClpY complex is dependent on binding of ATP.

The protein localises to the cytoplasm. ATPase activity is much induced upon complex formation with ClpQ. Its function is as follows. ATPase subunit of a proteasome-like degradation complex; this subunit has chaperone activity. The polypeptide is ATP-dependent protease ATPase subunit ClpY (clpY) (Bacillus subtilis (strain 168)).